The primary structure comprises 454 residues: Asparagine--tRNA ligase (454 aa).

The protein belongs to the class-II aminoacyl-tRNA synthetase family. Homodimer.

It is found in the cytoplasm. It carries out the reaction tRNA(Asn) + L-asparagine + ATP = L-asparaginyl-tRNA(Asn) + AMP + diphosphate + H(+). This is Asparagine--tRNA ligase from Microcystis aeruginosa (strain NIES-843 / IAM M-2473).